The following is a 189-amino-acid chain: Apolipoprotein D (189 aa).

The first 20 residues, 1-20, serve as a signal peptide directing secretion; the sequence is MVMLLLLLSALAGLFGAAEG. Pyrrolidone carboxylic acid is present on Gln21. 2 disulfides stabilise this stretch: Cys28–Cys134 and Cys61–Cys185. Asn65 and Asn98 each carry an N-linked (GlcNAc...) (complex) asparagine glycan.

Belongs to the calycin superfamily. Lipocalin family. As to quaternary structure, homodimer. In plasma, also exists as a disulfide-linked heterodimer with APOA2. In terms of processing, N-glycosylated. N-glycan heterogeneity at Asn-65: Hex5HexNAc4 (major) and Hex6HexNAc5 (minor); at Asn-98: Hex5HexNAc4 (minor), dHex1Hex5HexNAc4 (major), dHex1Hex6HexNAc5 (minor) and dHex1Hex7HexNAc6 (minor). Expressed in liver, intestine, pancreas, kidney, placenta, adrenal, spleen, fetal brain tissue and tears.

Its subcellular location is the secreted. Functionally, APOD occurs in the macromolecular complex with lecithin-cholesterol acyltransferase. It is probably involved in the transport and binding of bilin. Appears to be able to transport a variety of ligands in a number of different contexts. In Homo sapiens (Human), this protein is Apolipoprotein D (APOD).